A 666-amino-acid polypeptide reads, in one-letter code: MLPEAGSLWLLKLLRDIQLAQFYWPILEELNVTRPEHFDFVKPEDLDGIGMGRPAQRRLSEALKRLRSGPKSKNWVYKILGGFAPEHKEPTLPSDSPRHLPEPEGGLKCLIPEGAVCRGELLGSGCFGVVHRGLWTLPSGKSVPVAVKSLRVGPEGPMGTELGDFLREVSVMMNLEHPHVLRLHGLVLGQPLQMVMELAPLGSLHARLTAPAPTPPLLVALLCLFLRQLAGAMAYLGARGLVHRDLATRNLLLASPRTIKVADFGLVRPLGGARGRYVMGGPRPIPYAWCAPESLRHGAFSSASDVWMFGVTLWEMFSGGEEPWAGVPPYLILQRLEDRARLPRPPLCSRALYSLALRCWAPHPADRPSFSHLEGLLQEAGPSEACCVRDVTEPGALRMETGDPITVIEGSSSFHSPDSTIWKGQNGRTFKVGSFPASAVTLADAGGLPATRPVHRGTPARGDQHPGSIDGDRKKANLWDAPPARGQRRNMPLERMKGISRSLESVLSLGPRPTGGGSSPPEIRQARAVPQGPPGLPPRPPLSSSSPQPSQPSRERLPWPKRKPPHNHPMGMPGARKAAALSGGLLSDPELQRKIMEVELSVHGVTHQECQTALGATGGDVVSAIRNLKVDQLFHLSSRSRADCWRILEHYQWDLSAASRYVLARP.

Phosphoserine occurs at positions 60 and 96. One can recognise a Protein kinase domain in the interval 116 to 377 (VCRGELLGSG…PSFSHLEGLL (262 aa)). Residues 122–130 (LGSGCFGVV) and K148 each bind ATP. D245 functions as the Proton acceptor in the catalytic mechanism. 2 positions are modified to phosphoserine: S255 and S411. Residues 380–445 (AGPSEACCVR…PASAVTLADA (66 aa)) enclose the SH3 domain. The segment at 446-493 (GGLPATRPVHRGTPARGDQHPGSIDGDRKKANLWDAPPARGQRRNMPL) is disordered. S502 carries the post-translational modification Phosphoserine. Residues 506-579 (VLSLGPRPTG…MGMPGARKAA (74 aa)) are disordered. Phosphothreonine is present on T514. The residue at position 519 (S519) is a Phosphoserine. The segment covering 531-541 (QGPPGLPPRPP) has biased composition (pro residues). Over residues 542 to 552 (LSSSSPQPSQP) the composition is skewed to low complexity. S582 is subject to Phosphoserine.

It belongs to the protein kinase superfamily. Tyr protein kinase family. As to quaternary structure, interacts with the SH3 domain of PLCG1 via its Pro-rich domain. In terms of processing, autophosphorylated on tyrosine residues. As to expression, expressed in all umbilical cord blood, bone marrow and adult blood cell sub-populations and in several leukemia cell lines. Highly expressed in fetal blood, brain, lung, liver and kidney. Detected at lower levels in adult prostate, testis, ovary, small intestine and colon. Not expressed in adult lung, liver, kidney or brain.

It is found in the cytoplasm. It localises to the membrane. It carries out the reaction L-tyrosyl-[protein] + ATP = O-phospho-L-tyrosyl-[protein] + ADP + H(+). Involved in negative regulation of cell growth. Has tumor suppressor properties. Plays a negative regulatory role in the Ras-MAPK pathway. May function in signaling pathways utilized broadly during fetal development and more selectively in adult tissues and in cells of the lymphohematopoietic system. Could specifically be involved in phospholipid signal transduction. This is Non-receptor tyrosine-protein kinase TNK1 from Homo sapiens (Human).